The chain runs to 249 residues: Coproheme decarboxylase (249 aa).

Residues Arg131, 145-149, His172, and Gln185 each bind Fe-coproporphyrin III; that span reads YPMDK. The active site involves Tyr145.

Belongs to the ChdC family. Type 1 subfamily. Fe-coproporphyrin III is required as a cofactor.

It catalyses the reaction Fe-coproporphyrin III + 2 H2O2 + 2 H(+) = heme b + 2 CO2 + 4 H2O. The catalysed reaction is Fe-coproporphyrin III + H2O2 + H(+) = harderoheme III + CO2 + 2 H2O. It carries out the reaction harderoheme III + H2O2 + H(+) = heme b + CO2 + 2 H2O. It functions in the pathway porphyrin-containing compound metabolism; protoheme biosynthesis. Its function is as follows. Involved in coproporphyrin-dependent heme b biosynthesis. Catalyzes the decarboxylation of Fe-coproporphyrin III (coproheme) to heme b (protoheme IX), the last step of the pathway. The reaction occurs in a stepwise manner with a three-propionate intermediate. The polypeptide is Coproheme decarboxylase (Staphylococcus epidermidis (strain ATCC 12228 / FDA PCI 1200)).